Reading from the N-terminus, the 783-residue chain is Lon protease (783 aa).

In terms of domain architecture, Lon N-terminal spans 16-210; sequence LPLLASRGVV…KLLEIIKDEI (195 aa). 361–368 contributes to the ATP binding site; the sequence is GAPGVGKT. The 182-residue stretch at 597–778 folds into the Lon proteolytic domain; it reads KDRVGVATGM…DQVLDLILGG (182 aa). Residues Ser-684 and Lys-727 contribute to the active site.

Belongs to the peptidase S16 family. As to quaternary structure, homohexamer. Organized in a ring with a central cavity.

It localises to the cytoplasm. The enzyme catalyses Hydrolysis of proteins in presence of ATP.. In terms of biological role, ATP-dependent serine protease that mediates the selective degradation of mutant and abnormal proteins as well as certain short-lived regulatory proteins. Required for cellular homeostasis and for survival from DNA damage and developmental changes induced by stress. Degrades polypeptides processively to yield small peptide fragments that are 5 to 10 amino acids long. Binds to DNA in a double-stranded, site-specific manner. The sequence is that of Lon protease from Halothermothrix orenii (strain H 168 / OCM 544 / DSM 9562).